Reading from the N-terminus, the 199-residue chain is 3-isopropylmalate dehydratase small subunit (199 aa).

The protein belongs to the LeuD family. LeuD type 1 subfamily. As to quaternary structure, heterodimer of LeuC and LeuD.

It catalyses the reaction (2R,3S)-3-isopropylmalate = (2S)-2-isopropylmalate. It participates in amino-acid biosynthesis; L-leucine biosynthesis; L-leucine from 3-methyl-2-oxobutanoate: step 2/4. Its function is as follows. Catalyzes the isomerization between 2-isopropylmalate and 3-isopropylmalate, via the formation of 2-isopropylmaleate. This is 3-isopropylmalate dehydratase small subunit from Bacillus velezensis (strain DSM 23117 / BGSC 10A6 / LMG 26770 / FZB42) (Bacillus amyloliquefaciens subsp. plantarum).